We begin with the raw amino-acid sequence, 316 residues long: BTB/POZ domain-containing adapter for CUL3-mediated RhoA degradation protein 2 (316 aa).

The BTB domain maps to K28–Q96. Positions E268–P279 are enriched in polar residues. The tract at residues E268–E287 is disordered. S278 carries the post-translational modification Phosphoserine. A Phosphoserine; by CK2 modification is found at S280.

It belongs to the BACURD family. As to quaternary structure, component of the BCR(TNFAIP1) E3 ubiquitin ligase complex, at least composed of CUL3, TNFAIP1/BACURD2 and RBX1. Interacts with RHOA; with a preference for RhoA-GDP. Interacts with RHOB. Interacts with PCNA. Interacts with CSNK2B. In terms of processing, phosphorylation at Ser-280 by CK2 facilitates the nucleus localization and increases interaction with PCNA.

The protein localises to the cytoplasm. Its subcellular location is the nucleus. It is found in the endosome. Its pathway is protein modification; protein ubiquitination. Substrate-specific adapter of a BCR (BTB-CUL3-RBX1) E3 ubiquitin-protein ligase complex involved in regulation of cytoskeleton structure. The BCR(TNFAIP1) E3 ubiquitin ligase complex mediates the ubiquitination of RHOA, leading to its degradation by the proteasome, thereby regulating the actin cytoskeleton and cell migration. Its interaction with RHOB may regulate apoptosis. May enhance the PCNA-dependent DNA polymerase delta activity. The polypeptide is BTB/POZ domain-containing adapter for CUL3-mediated RhoA degradation protein 2 (TNFAIP1) (Homo sapiens (Human)).